Consider the following 348-residue polypeptide: Chaperone protein DnaJ (348 aa).

The 63-residue stretch at 3–65 folds into the J domain; sequence DLYGILGVDH…EQRQRYDRHV (63 aa). The CR-type zinc-finger motif lies at 109-191; sequence GGSQVVKIDS…CYGNGSRSAP (83 aa). Zn(2+) is bound by residues Cys-122, Cys-125, Cys-139, Cys-142, Cys-165, Cys-168, Cys-179, and Cys-182. 4 CXXCXGXG motif repeats span residues 122–129, 139–146, 165–172, and 179–186; these read CDVCNGTR, CFDCNGSG, CSKCRGNG, and CRRCYGNG.

It belongs to the DnaJ family. Homodimer. It depends on Zn(2+) as a cofactor.

The protein resides in the cytoplasm. In terms of biological role, participates actively in the response to hyperosmotic and heat shock by preventing the aggregation of stress-denatured proteins and by disaggregating proteins, also in an autonomous, DnaK-independent fashion. Unfolded proteins bind initially to DnaJ; upon interaction with the DnaJ-bound protein, DnaK hydrolyzes its bound ATP, resulting in the formation of a stable complex. GrpE releases ADP from DnaK; ATP binding to DnaK triggers the release of the substrate protein, thus completing the reaction cycle. Several rounds of ATP-dependent interactions between DnaJ, DnaK and GrpE are required for fully efficient folding. Also involved, together with DnaK and GrpE, in the DNA replication of plasmids through activation of initiation proteins. The chain is Chaperone protein DnaJ from Tropheryma whipplei (strain Twist) (Whipple's bacillus).